Reading from the N-terminus, the 535-residue chain is Arginine-containing cyclodipeptide synthase anoA (535 aa).

Residues 93–114 form a disordered region; the sequence is LLSPPREPGPIDSETKTREKKS. The span at 105–114 shows a compositional bias: basic and acidic residues; it reads SETKTREKKS. Positions 424–428 match the Conserved DDXXE motif motif; the sequence is DDIAE.

Belongs to the arginine-containing cyclodipeptide synthase family.

The catalysed reaction is L-tryptophyl-tRNA(Trp) + L-arginyl-tRNA(Arg) = cyclo(L-arginyl-L-tryptophyl) + tRNA(Trp) + tRNA(Arg) + H(+). It functions in the pathway secondary metabolite biosynthesis. Its function is as follows. Arginine-containing cyclodipeptide synthase; part of the cluster that mediates the biosynthesis of a highly modified cyclo-arginine-tryptophan dipeptide (cRW). Within the pathway, AnoA acts as the scaffold-generating enzyme and is responsible for formation of the cyclo-Arg-Trp diketopiperazine (cRW) from L-arginyl-tRNA(Arg) + L-tryptophanyl-tRNA(Trp). Additional enzymes from the cluster then further modify the cyclo-Arg-Asp diketopiperazine (cRW) scaffold. The sequence is that of Arginine-containing cyclodipeptide synthase anoA from Aspergillus nomiae (Aspergillus nomius).